The primary structure comprises 83 residues: Cytochrome b559 subunit alpha (83 aa).

A helical transmembrane segment spans residues 21–35 (VIHSITIPSLFIAGW). A heme-binding site is contributed by H23.

This sequence belongs to the PsbE/PsbF family. In terms of assembly, heterodimer of an alpha subunit and a beta subunit. PSII is composed of 1 copy each of membrane proteins PsbA, PsbB, PsbC, PsbD, PsbE, PsbF, PsbH, PsbI, PsbJ, PsbK, PsbL, PsbM, PsbT, PsbX, PsbY, PsbZ, Psb30/Ycf12, at least 3 peripheral proteins of the oxygen-evolving complex and a large number of cofactors. It forms dimeric complexes. Heme b serves as cofactor.

Its subcellular location is the plastid. It localises to the chloroplast thylakoid membrane. In terms of biological role, this b-type cytochrome is tightly associated with the reaction center of photosystem II (PSII). PSII is a light-driven water:plastoquinone oxidoreductase that uses light energy to abstract electrons from H(2)O, generating O(2) and a proton gradient subsequently used for ATP formation. It consists of a core antenna complex that captures photons, and an electron transfer chain that converts photonic excitation into a charge separation. The protein is Cytochrome b559 subunit alpha of Phalaenopsis aphrodite subsp. formosana (Moth orchid).